The primary structure comprises 449 residues: NADH-quinone oxidoreductase subunit H (449 aa).

The next 9 helical transmembrane spans lie at 29–49 (ILLKAVAVFAFLLLMTLFAIV), 96–116 (PIFILAPIVSAVPAFLAFAVI), 136–156 (LPVSVLYLLAAASLGVYGLIL), 177–197 (IISYEVAMGLAFVAVFIYAGT), 211–231 (WYIVLVPSFVLYCISMVGETN), 259–279 (FFFLAEYINMVTVSAIATTLF), 298–318 (WVPLIWFVLKLLAFLFFFIWL), 330–350 (FMSFGWKVLIPVGLVWVLAVA), and 365–385 (WLVGFGVVVGILLIVALIDPG). Residues 393–402 (LEEAEQRKLA) show a composition bias toward basic and acidic residues. The disordered stretch occupies residues 393–449 (LEEAEQRKLAEAPSLDRIPWPPPPQAAGRGRPAVSAGASANGSSTVIPADPGPRQER). Over residues 418–436 (AAGRGRPAVSAGASANGSS) the composition is skewed to low complexity.

It belongs to the complex I subunit 1 family. As to quaternary structure, NDH-1 is composed of 14 different subunits. Subunits NuoA, H, J, K, L, M, N constitute the membrane sector of the complex.

The protein localises to the cell membrane. It catalyses the reaction a quinone + NADH + 5 H(+)(in) = a quinol + NAD(+) + 4 H(+)(out). NDH-1 shuttles electrons from NADH, via FMN and iron-sulfur (Fe-S) centers, to quinones in the respiratory chain. The immediate electron acceptor for the enzyme in this species is believed to be ubiquinone. Couples the redox reaction to proton translocation (for every two electrons transferred, four hydrogen ions are translocated across the cytoplasmic membrane), and thus conserves the redox energy in a proton gradient. This subunit may bind ubiquinone. The sequence is that of NADH-quinone oxidoreductase subunit H from Frankia casuarinae (strain DSM 45818 / CECT 9043 / HFP020203 / CcI3).